Reading from the N-terminus, the 113-residue chain is Large ribosomal subunit protein bL19 (113 aa).

This sequence belongs to the bacterial ribosomal protein bL19 family.

This protein is located at the 30S-50S ribosomal subunit interface and may play a role in the structure and function of the aminoacyl-tRNA binding site. This chain is Large ribosomal subunit protein bL19, found in Natranaerobius thermophilus (strain ATCC BAA-1301 / DSM 18059 / JW/NM-WN-LF).